The sequence spans 182 residues: Large ribosomal subunit protein uL13 (182 aa).

It belongs to the universal ribosomal protein uL13 family. Part of the 50S ribosomal subunit.

This protein is one of the early assembly proteins of the 50S ribosomal subunit, although it is not seen to bind rRNA by itself. It is important during the early stages of 50S assembly. The polypeptide is Large ribosomal subunit protein uL13 (Pyrobaculum neutrophilum (strain DSM 2338 / JCM 9278 / NBRC 100436 / V24Sta) (Thermoproteus neutrophilus)).